We begin with the raw amino-acid sequence, 392 residues long: Tyrosine--tRNA ligase (392 aa).

A 'HIGH' region motif is present at residues 41–50 (PTAPDLHLGH). A 'KMSKS' region motif is present at residues 225 to 229 (KMSKS). ATP is bound at residue Lys228. The 61-residue stretch at 330 to 390 (LRAVDFLVKI…VGKKKFYRVV (61 aa)) folds into the S4 RNA-binding domain.

It belongs to the class-I aminoacyl-tRNA synthetase family. TyrS type 2 subfamily. Homodimer.

It is found in the cytoplasm. The enzyme catalyses tRNA(Tyr) + L-tyrosine + ATP = L-tyrosyl-tRNA(Tyr) + AMP + diphosphate + H(+). Its function is as follows. Catalyzes the attachment of tyrosine to tRNA(Tyr) in a two-step reaction: tyrosine is first activated by ATP to form Tyr-AMP and then transferred to the acceptor end of tRNA(Tyr). This chain is Tyrosine--tRNA ligase, found in Aquifex aeolicus (strain VF5).